A 203-amino-acid polypeptide reads, in one-letter code: Small ribosomal subunit protein uS5 (203 aa).

A compositionally biased stretch (basic and acidic residues) spans 1–18; sequence MENNVKKETIVDSEKVEK. Residues 1–36 form a disordered region; the sequence is MENNVKKETIVDSEKVEKQQPVTAPVVNKKENTQPK. An S5 DRBM domain is found at 49-112; that stretch reads FEERVVKIKR…KNANNNLIKV (64 aa).

It belongs to the universal ribosomal protein uS5 family. Part of the 30S ribosomal subunit. Contacts proteins S4 and S8.

Its function is as follows. With S4 and S12 plays an important role in translational accuracy. In terms of biological role, located at the back of the 30S subunit body where it stabilizes the conformation of the head with respect to the body. This Ureaplasma urealyticum serovar 10 (strain ATCC 33699 / Western) protein is Small ribosomal subunit protein uS5.